A 325-amino-acid chain; its full sequence is Undecaprenyl-phosphate 4-deoxy-4-formamido-L-arabinose transferase (325 aa).

The next 2 membrane-spanning stretches (helical) occupy residues leucine 234–isoleucine 254 and valine 269–leucine 289.

It belongs to the glycosyltransferase 2 family.

The protein resides in the cell inner membrane. The enzyme catalyses UDP-4-deoxy-4-formamido-beta-L-arabinose + di-trans,octa-cis-undecaprenyl phosphate = 4-deoxy-4-formamido-alpha-L-arabinopyranosyl di-trans,octa-cis-undecaprenyl phosphate + UDP. It functions in the pathway glycolipid biosynthesis; 4-amino-4-deoxy-alpha-L-arabinose undecaprenyl phosphate biosynthesis; 4-amino-4-deoxy-alpha-L-arabinose undecaprenyl phosphate from UDP-4-deoxy-4-formamido-beta-L-arabinose and undecaprenyl phosphate: step 1/2. Its pathway is bacterial outer membrane biogenesis; lipopolysaccharide biosynthesis. In terms of biological role, catalyzes the transfer of 4-deoxy-4-formamido-L-arabinose from UDP to undecaprenyl phosphate. The modified arabinose is attached to lipid A and is required for resistance to polymyxin and cationic antimicrobial peptides. In Erwinia tasmaniensis (strain DSM 17950 / CFBP 7177 / CIP 109463 / NCPPB 4357 / Et1/99), this protein is Undecaprenyl-phosphate 4-deoxy-4-formamido-L-arabinose transferase.